Consider the following 416-residue polypeptide: UDP-N-acetylglucosamine 1-carboxyvinyltransferase (416 aa).

22–23 (KN) provides a ligand contact to phosphoenolpyruvate. Arg-92 lines the UDP-N-acetyl-alpha-D-glucosamine pocket. Catalysis depends on Cys-116, which acts as the Proton donor. Cys-116 is modified (2-(S-cysteinyl)pyruvic acid O-phosphothioketal). UDP-N-acetyl-alpha-D-glucosamine contacts are provided by Asp-306 and Ile-328.

The protein belongs to the EPSP synthase family. MurA subfamily.

Its subcellular location is the cytoplasm. The catalysed reaction is phosphoenolpyruvate + UDP-N-acetyl-alpha-D-glucosamine = UDP-N-acetyl-3-O-(1-carboxyvinyl)-alpha-D-glucosamine + phosphate. Its pathway is cell wall biogenesis; peptidoglycan biosynthesis. Functionally, cell wall formation. Adds enolpyruvyl to UDP-N-acetylglucosamine. The chain is UDP-N-acetylglucosamine 1-carboxyvinyltransferase from Buchnera aphidicola subsp. Baizongia pistaciae (strain Bp).